The following is an 807-amino-acid chain: Enhancer of polycomb homolog 2 (807 aa).

Residues Lys-135, Lys-195, Lys-324, and Lys-362 each participate in a glycyl lysine isopeptide (Lys-Gly) (interchain with G-Cter in SUMO2) cross-link. Residues 376–396 (DEFPQVLSPVSEPEEENDPDG) are disordered. Ser-538 is modified (phosphoserine). Residues 600-613 (QLQQKQQSQHSSQQ) show a composition bias toward low complexity. 2 disordered regions span residues 600–628 (QLQQ…DCMS) and 645–673 (SAPV…QPSG). Composition is skewed to polar residues over residues 614–628 (THPK…DCMS) and 657–673 (EQNT…QPSG). A Phosphoserine modification is found at Ser-754.

It belongs to the enhancer of polycomb family.

It localises to the nucleus. Its function is as follows. May play a role in transcription or DNA repair. This chain is Enhancer of polycomb homolog 2 (EPC2), found in Homo sapiens (Human).